A 258-amino-acid polypeptide reads, in one-letter code: 6-carboxyhexanoate--CoA ligase (258 aa).

The protein belongs to the BioW family. In terms of assembly, homodimer. It depends on Mg(2+) as a cofactor.

It catalyses the reaction heptanedioate + ATP + CoA = 6-carboxyhexanoyl-CoA + AMP + diphosphate. Its pathway is metabolic intermediate metabolism; pimeloyl-CoA biosynthesis; pimeloyl-CoA from pimelate: step 1/1. In terms of biological role, catalyzes the transformation of pimelate into pimeloyl-CoA with concomitant hydrolysis of ATP to AMP. This chain is 6-carboxyhexanoate--CoA ligase, found in Bacillus subtilis (strain BSn5).